We begin with the raw amino-acid sequence, 103 residues long: Large ribosomal subunit protein bL21 (103 aa).

Belongs to the bacterial ribosomal protein bL21 family. Part of the 50S ribosomal subunit. Contacts protein L20.

In terms of biological role, this protein binds to 23S rRNA in the presence of protein L20. The sequence is that of Large ribosomal subunit protein bL21 from Legionella pneumophila (strain Lens).